The following is a 325-amino-acid chain: Phosphatidylserine decarboxylase proenzyme (325 aa).

Residues Asp-90, His-147, and Ser-253 each act as charge relay system; for autoendoproteolytic cleavage activity in the active site. Ser-253 serves as the catalytic Schiff-base intermediate with substrate; via pyruvic acid; for decarboxylase activity. At Ser-253 the chain carries Pyruvic acid (Ser); by autocatalysis. The interval 281-325 is disordered; sequence MASKMSSQKAITPEQTTETPVQASNEFDDNAGETKKDTPSEGADS. Residues 284–305 are compositionally biased toward polar residues; the sequence is KMSSQKAITPEQTTETPVQASN.

This sequence belongs to the phosphatidylserine decarboxylase family. PSD-B subfamily. Prokaryotic type I sub-subfamily. Heterodimer of a large membrane-associated beta subunit and a small pyruvoyl-containing alpha subunit. The cofactor is pyruvate. In terms of processing, is synthesized initially as an inactive proenzyme. Formation of the active enzyme involves a self-maturation process in which the active site pyruvoyl group is generated from an internal serine residue via an autocatalytic post-translational modification. Two non-identical subunits are generated from the proenzyme in this reaction, and the pyruvate is formed at the N-terminus of the alpha chain, which is derived from the carboxyl end of the proenzyme. The autoendoproteolytic cleavage occurs by a canonical serine protease mechanism, in which the side chain hydroxyl group of the serine supplies its oxygen atom to form the C-terminus of the beta chain, while the remainder of the serine residue undergoes an oxidative deamination to produce ammonia and the pyruvoyl prosthetic group on the alpha chain. During this reaction, the Ser that is part of the protease active site of the proenzyme becomes the pyruvoyl prosthetic group, which constitutes an essential element of the active site of the mature decarboxylase.

The protein resides in the cell membrane. It catalyses the reaction a 1,2-diacyl-sn-glycero-3-phospho-L-serine + H(+) = a 1,2-diacyl-sn-glycero-3-phosphoethanolamine + CO2. The protein operates within phospholipid metabolism; phosphatidylethanolamine biosynthesis; phosphatidylethanolamine from CDP-diacylglycerol: step 2/2. Catalyzes the formation of phosphatidylethanolamine (PtdEtn) from phosphatidylserine (PtdSer). The chain is Phosphatidylserine decarboxylase proenzyme from Alteromonas mediterranea (strain DSM 17117 / CIP 110805 / LMG 28347 / Deep ecotype).